An 853-amino-acid chain; its full sequence is Trimethylguanosine synthase (853 aa).

The disordered stretch occupies residues Asn-53–Ile-80. At Ser-55 the chain carries Phosphoserine. Thr-60 bears the Phosphothreonine mark. Ser-85, Ser-89, Ser-96, and Ser-141 each carry phosphoserine. At Tyr-146 the chain carries Phosphotyrosine. The segment at Asp-149–Thr-187 is disordered. Phosphoserine is present on Ser-154. Positions Asp-156–Leu-171 are enriched in polar residues. Ser-189 is modified (phosphoserine). 2 disordered regions span residues Ser-334 to Pro-461 and Asp-527 to Asn-632. Low complexity predominate over residues Asn-367–Thr-382. Phosphoserine is present on residues Ser-412, Ser-438, and Ser-578. The segment covering Asp-431–Asp-442 has biased composition (acidic residues). The segment covering Glu-564 to Ser-578 has biased composition (polar residues). Over residues Pro-608–Val-619 the composition is skewed to basic and acidic residues. Over residues Lys-620–Lys-630 the composition is skewed to basic residues. The tract at residues Val-631–Ile-846 is sufficient for catalytic activity. Asp-719 lines the S-adenosyl-L-methionine pocket. Trp-766 lines the N(7)-methylguanosine pocket.

The protein belongs to the methyltransferase superfamily. Trimethylguanosine synthase family. In terms of assembly, may form homooligomers. Interacts with CREBBP/CBP, EED/WAIT1, EP300/P300, NCOA6/PRIP, PPARBP/PBP and SMN. Ubiquitously expressed. High expression in heart, skeletal muscle, kidney, liver and placenta.

The protein localises to the cytoplasm. Its subcellular location is the nucleus. It localises to the cajal body. It is found in the nucleolus. It catalyses the reaction a 5'-end (N(7)-methyl 5'-triphosphoguanosine)-ribonucleoside in snRNA + S-adenosyl-L-methionine = a 5'-end (N(2),N(7)-dimethyl 5'-triphosphoguanosine)-ribonucleoside in snRNA + S-adenosyl-L-homocysteine + H(+). The catalysed reaction is a 5'-end (N(7)-methyl 5'-triphosphoguanosine)-ribonucleoside in snoRNA + S-adenosyl-L-methionine = a 5'-end (N(2),N(7)-dimethyl 5'-triphosphoguanosine)-ribonucleoside in snoRNA + S-adenosyl-L-homocysteine + H(+). It carries out the reaction a 5'-end (N(2),N(7)-dimethyl 5'-triphosphoguanosine)-ribonucleoside in snRNA + S-adenosyl-L-methionine = a 5'-end (N(2),N(2),N(7)-trimethyl 5'-triphosphoguanosine)-ribonucleoside in snRNA + S-adenosyl-L-homocysteine + H(+). The enzyme catalyses a 5'-end (N(2),N(7)-dimethyl 5'-triphosphoguanosine)-ribonucleoside in snoRNA + S-adenosyl-L-methionine = a 5'-end (N(2),N(2),N(7)-trimethyl 5'-triphosphoguanosine)-ribonucleoside in snoRNA + S-adenosyl-L-homocysteine + H(+). Its function is as follows. Catalyzes the 2 serial methylation steps for the conversion of the 7-monomethylguanosine (m(7)G) caps of snRNAs and snoRNAs to a 2,2,7-trimethylguanosine (m(2,2,7)G) cap structure. The enzyme is specific for guanine, and N7 methylation must precede N2 methylation. Hypermethylation of the m7G cap of U snRNAs leads to their concentration in nuclear foci, their colocalization with coilin and the formation of canonical Cajal bodies (CBs). Plays a role in transcriptional regulation. The protein is Trimethylguanosine synthase (TGS1) of Homo sapiens (Human).